The sequence spans 93 residues: Protein FptB (93 aa).

An N-terminal signal peptide occupies residues 1–25; that stretch reads MPRQSGFGWAWRVPLALAGSLAAAT. The next 2 helical transmembrane spans lie at 44–64 and 71–91; these read LYAG…GGLL and FAWR…LLAG.

It localises to the cell membrane. Functionally, may play some role in transport of Fe(3+)-pyochelin. This is Protein FptB (fptB) from Pseudomonas aeruginosa (strain ATCC 15692 / DSM 22644 / CIP 104116 / JCM 14847 / LMG 12228 / 1C / PRS 101 / PAO1).